A 366-amino-acid polypeptide reads, in one-letter code: Peptide chain release factor 2 (366 aa).

Q251 is modified (N5-methylglutamine).

This sequence belongs to the prokaryotic/mitochondrial release factor family. In terms of processing, methylated by PrmC. Methylation increases the termination efficiency of RF2.

The protein resides in the cytoplasm. Its function is as follows. Peptide chain release factor 2 directs the termination of translation in response to the peptide chain termination codons UGA and UAA. The protein is Peptide chain release factor 2 (prfB) of Bacillus subtilis (strain 168).